Consider the following 506-residue polypeptide: Histone deacetylase complex subunit CTI6 (506 aa).

Positions 49-71 are disordered; sequence EESVKQEDVPMEGGEGEVEEEEG. The span at 62–71 shows a compositional bias: acidic residues; sequence GEGEVEEEEG. The PHD-type zinc finger occupies 72–123; sequence ETRCICGELDTPDDSGFFIQCEQCSSWQHGYCVSITQDNAPDKYWCEQCRPE. The segment at 138–425 is disordered; sequence IYKPVQEKRR…KPRLPPQRTS (288 aa). Thr174 bears the Phosphothreonine mark. Ser175 is modified (phosphoserine). Thr177 bears the Phosphothreonine mark. Residues 179–195 show a composition bias toward acidic residues; it reads DNVDDIGDEEDEVEDEA. Ser216 and Ser267 each carry phosphoserine. Composition is skewed to basic and acidic residues over residues 231-271 and 312-342; these read DSDK…HQED and DDMKESLRPSKEQSMEKTNDVEKEASQEKES. Residues 373–393 are compositionally biased toward basic residues; that stretch reads ASSRGSKRVSKPARKGNRTRR. The segment covering 394–404 has biased composition (polar residues); it reads SNTSSDTNQNR. Positions 405–415 are enriched in basic and acidic residues; the sequence is RSADIGTDKPV.

Component of the RPD3C(L) complex composed of at least ASH1, CTI6, DEP1, PHO23, RPD3, RXT2, RXT3, SAP30, SDS3, SIN3, UME1 and UME6. Interacts with CYC8.

It localises to the nucleus. In terms of biological role, component of the RPD3C(L) histone deacetylase complex (HDAC). Responsible for the deacetylation of lysine residues on the N-terminal part of the core histones (H2A, H2B, H3 and H4). Histone deacetylation gives a tag for epigenetic repression and plays an important role in transcriptional regulation, cell cycle progression and developmental events. CTI6 links the SAGA coactivator to the CYC8-TUP1 corepressor. Involved in transcription regulation of heme-regulated genes and required for GCN5 recruitment, histone H3 acetylation and SPT15/TBP binding to promoters. The polypeptide is Histone deacetylase complex subunit CTI6 (CTI6) (Saccharomyces cerevisiae (strain ATCC 204508 / S288c) (Baker's yeast)).